Here is a 110-residue protein sequence, read N- to C-terminus: Small ribosomal subunit protein bS16 (110 aa).

The interval 79 to 110 (AAGVKKREARNNPQKAVPRKERKAQAEAAAKG) is disordered.

The protein belongs to the bacterial ribosomal protein bS16 family.

The sequence is that of Small ribosomal subunit protein bS16 from Bradyrhizobium diazoefficiens (strain JCM 10833 / BCRC 13528 / IAM 13628 / NBRC 14792 / USDA 110).